The primary structure comprises 186 residues: TATA box-binding protein-like 1 (186 aa).

Belongs to the TBP family.

It is found in the cytoplasm. Its subcellular location is the nucleus. Part of a specialized transcription system that mediates the transcription of most ribosomal proteins through the 5'-TCT-3' motif which is a core promoter element at these genes. Seems to also mediate the transcription of NF1. Does not bind the TATA box. Members of the TBP family are differentially required to regulate transcription and development during early embryogenesis. This chain is TATA box-binding protein-like 1, found in Danio rerio (Zebrafish).